Here is a 169-residue protein sequence, read N- to C-terminus: NADH dehydrogenase [ubiquinone] 1 alpha subcomplex assembly factor 2 (169 aa).

Positions 116–169 are disordered; sequence TSEELLPPPVQTQIKGHASAPYFGKEEPSVAPSSTGKTFQPGSWMPRDGKSHNQ. A Phosphoserine modification is found at S134. A compositionally biased stretch (polar residues) spans 146–156; it reads APSSTGKTFQP.

Belongs to the complex I NDUFA12 subunit family. In terms of assembly, interacts with ARMC9. As to expression, highly expressed in ESCC cells. Also expressed in heart, skeletal muscle, liver, and in fibroblasts.

The protein localises to the mitochondrion. Functionally, acts as a molecular chaperone for mitochondrial complex I assembly. Complex I functions in the transfer of electrons from NADH to the respiratory chain. The immediate electron acceptor for the enzyme is believed to be ubiquinone. Is involved in the initial steps of cilia formation, including removal of CP110 from the mother centrioles, docking of membrane vesicles to the mother centrioles, and establishment of the transition zone. This is NADH dehydrogenase [ubiquinone] 1 alpha subcomplex assembly factor 2 (NDUFAF2) from Homo sapiens (Human).